Here is a 326-residue protein sequence, read N- to C-terminus: UPF0324 membrane protein PBPRB0970 (326 aa).

Transmembrane regions (helical) follow at residues 27 to 49 (FFII…ILGF), 70 to 89 (LLAY…QAIA), 94 to 116 (GFGL…TKAL), 123 to 145 (GHLI…APAI), 155 to 177 (ALAT…GHLL), 184 to 206 (FGTW…GAYG), 216 to 235 (IKLA…ALLF), 242 to 261 (IGIP…AHFV), 271 to 290 (IFVA…GSGI), and 303 to 325 (LLLG…LLNV).

The protein belongs to the UPF0324 family.

The protein resides in the cell membrane. This chain is UPF0324 membrane protein PBPRB0970, found in Photobacterium profundum (strain SS9).